Here is a 440-residue protein sequence, read N- to C-terminus: MDRFFCTVWVWSVLFGACTSQTRSSFSLNADGLNSSGVAHASEHVSHAAAMGNEAGAADASVSESPASFSPGRGSAWVQGTVGHIPAEHHAALQAFFDTEEGMRITDALCTGDTYAAFNELEALYDPSSETDTARSRALHAYVRALLQGIRLAPRVAPPTHVGVSATLQYRDSVWPLQRGRFTLCYQIGPEHGDVMQVTLCADTQGVLFFPFPSAALSQEVTLSFDTAALVHAPSLCAQDSALQERPSSPEPVVSTIPSPEGEENSAAGEPALANLVCRVAAPSSDPKQHPVRRQVSTTICILDYGKTGRPLTHENLTATRLLGGLLKRRFVNIGLDSLYGVGKVPDHAVIARARKKFGGNVRRLVFGLTQVRRLERDSDARWKCVLFAQLHVWDFPKGAYTHHFTAQCTETGDTESQSYVRARTRMGETVLSDVLQCFL.

A signal peptide spans 1-17 (MDRFFCTVWVWSVLFGA). Cysteine 18 is lipidated: N-palmitoyl cysteine. Residue cysteine 18 is the site of S-diacylglycerol cysteine attachment. The interval 241-268 (SALQERPSSPEPVVSTIPSPEGEENSAA) is disordered.

It is found in the cell membrane. This is an uncharacterized protein from Treponema pallidum (strain Nichols).